We begin with the raw amino-acid sequence, 605 residues long: Class II receptor tyrosine kinase (605 aa).

Residues 1–67 form the Ig-like C2-type domain; it reads MWSSPGRNLE…DGESASFRVD (67 aa). Residues 1–84 lie on the Extracellular side of the membrane; that stretch reads MWSSPGRNLE…GSNSGVIAGV (84 aa). N-linked (GlcNAc...) asparagine glycans are attached at residues N26, N44, and N72. Residues 85-105 traverse the membrane as a helical segment; it reads LITLLLLIALIIILICVFWVV. Residues 106-605 lie on the Cytoplasmic side of the membrane; that stretch reads WRYRRRGKFD…GRPRGVAGCV (500 aa). Positions 209–230 are disordered; it reads EELSPIQEKPTRRNTGLSTYSQ. The segment covering 221–230 has biased composition (polar residues); that stretch reads RNTGLSTYSQ. Residues 346-605 form the Protein kinase domain; sequence IREVKQIGVG…GRPRGVAGCV (260 aa). Residues 352–360 and K393 each bind ATP; that span reads IGVGQFGAV. D496 functions as the Proton acceptor in the catalytic mechanism. Y527 is modified (phosphotyrosine; by autocatalysis).

It belongs to the protein kinase superfamily. Tyr protein kinase family. Insulin receptor subfamily. Phosphorylated.

Its subcellular location is the cell membrane. The catalysed reaction is L-tyrosyl-[protein] + ATP = O-phospho-L-tyrosyl-[protein] + ADP + H(+). This Geodia cydonium (Sponge) protein is Class II receptor tyrosine kinase (TK).